Consider the following 99-residue polypeptide: PE family protein PE13 (99 aa).

In terms of domain architecture, PE spans 1-93; that stretch reads MSFVMAYPEM…ASSYAATEVA (93 aa).

Belongs to the mycobacterial PE family.

The protein localises to the secreted. It is found in the cell wall. May play a pivotal role in the interaction between M.tuberculosis and host. Can enhance the survival within macrophages under stress conditions such as H(2)O(2), SDS and low pH. Increases the production of IL-6 and IL-1beta from macrophages, and decreases the secretion of suppressor of cytokine signaling 3 (SOCS-3). These changes probably involve the p38-ERK-NF-kappa-B signaling pathway. Also precipitates the macrophage death. The chain is PE family protein PE13 from Mycobacterium tuberculosis (strain ATCC 25618 / H37Rv).